The chain runs to 173 residues: Photosystem I assembly protein Ycf3 (173 aa).

3 TPR repeats span residues A35–P68, S72–L105, and G120–S153.

This sequence belongs to the Ycf3 family.

Its subcellular location is the plastid. It localises to the chloroplast thylakoid membrane. Essential for the assembly of the photosystem I (PSI) complex. May act as a chaperone-like factor to guide the assembly of the PSI subunits. The protein is Photosystem I assembly protein Ycf3 of Mesostigma viride (Green alga).